Consider the following 61-residue polypeptide: Small ribosomal subunit protein uS14 (61 aa).

4 residues coordinate Zn(2+): Cys-24, Cys-27, Cys-40, and Cys-43.

The protein belongs to the universal ribosomal protein uS14 family. Zinc-binding uS14 subfamily. Part of the 30S ribosomal subunit. Contacts proteins S3 and S10. Zn(2+) serves as cofactor.

Its function is as follows. Binds 16S rRNA, required for the assembly of 30S particles and may also be responsible for determining the conformation of the 16S rRNA at the A site. This chain is Small ribosomal subunit protein uS14, found in Campylobacter curvus (strain 525.92).